We begin with the raw amino-acid sequence, 912 residues long: Brevican core protein (912 aa).

Residues 1-22 form the signal peptide; that stretch reads MAPLFLPLLATLVLAWIPVALA. In terms of domain architecture, Ig-like V-type spans 36–155; the sequence is RVRIAGDAPL…SSDAVEVKVK (120 aa). Disulfide bonds link cysteine 57-cysteine 137, cysteine 179-cysteine 250, cysteine 203-cysteine 224, cysteine 277-cysteine 352, and cysteine 301-cysteine 322. A glycan (N-linked (GlcNAc...) asparagine) is linked at asparagine 130. Link domains follow at residues 157–252 and 257–354; these read VVFL…YCYA and GELF…YCFR. An N-linked (GlcNAc...) asparagine glycan is attached at asparagine 337. Disordered regions lie at residues 408-427 and 438-651; these read IPIIEDGGGGSSTPEDPAEA and SIVP…SGDC. Serine 418 carries the phosphoserine modification. A glycan (O-linked (Xyl...) (chondroitin sulfate) serine) is linked at serine 418. Over residues 448–463 the composition is skewed to basic and acidic residues; sequence EEGKVLEQEEKYRGEE. A compositionally biased stretch (acidic residues) spans 464-478; it reads EKEEEEEEEEVEDEA. Positions 520–537 are enriched in pro residues; that stretch reads VSPPPYDEPEAPRPPRVL. Residues 603–617 show a composition bias toward basic and acidic residues; the sequence is GDTRDLETPSEENSR. The region spanning 647-683 is the EGF-like domain; sequence SSGDCVPSPCHNGGTCLEEEEGVRCLCLPGYGGDLCD. Disulfide bonds link cysteine 651-cysteine 662, cysteine 656-cysteine 671, cysteine 673-cysteine 682, cysteine 689-cysteine 700, cysteine 717-cysteine 809, cysteine 785-cysteine 801, cysteine 816-cysteine 859, and cysteine 845-cysteine 872. The 129-residue stretch at 683 to 811 folds into the C-type lectin domain; sequence DVGLHFCSPG…NYHLSYTCKM (129 aa). The region spanning 814–874 is the Sushi domain; the sequence is VSCGPPPELP…WGLPQISCVP (61 aa).

It belongs to the aggrecan/versican proteoglycan family. Interacts with TNR. Post-translationally, O-glycosylated; contains chondroitin sulfate. As to expression, brain; expressed in cerebellar astrocytes but not in neurons.

The protein resides in the secreted. It localises to the extracellular space. The protein localises to the extracellular matrix. Functionally, may play a role in the terminally differentiating and the adult nervous system during postnatal development. Could stabilize interactions between hyaluronan (HA) and brain proteoglycans. This chain is Brevican core protein (BCAN), found in Bos taurus (Bovine).